Consider the following 154-residue polypeptide: Fimbrial protein (154 aa).

A propeptide spans 1–6 (MKAQKG) (leader sequence). The residue at position 7 (Phe7) is an N-methylphenylalanine. The chain crosses the membrane as a helical span at residues 7 to 27 (FTLIELMIVVAIIGILAAIAI). An intrachain disulfide couples Cys133 to Cys151. O-linked (FucNAc...) serine glycosylation occurs at Ser154.

The protein belongs to the N-Me-Phe pilin family. In terms of assembly, the pili are polar flexible filaments of about 5.4 nanometers diameter and 2.5 micrometers average length; they consist of only a single polypeptide chain arranged in a helical configuration of five subunits per turn in the assembled pilus. Post-translationally, O-glycosylated; glycan consists of 5NbetaOHC47NFmPse(alpha2-4)Xyl(beta1-3)FucNAc in beta1-O linkage to Ser.

The protein resides in the fimbrium. The protein localises to the membrane. The sequence is that of Fimbrial protein (pilA) from Pseudomonas aeruginosa.